The primary structure comprises 347 residues: Dihydroorotase (347 aa).

His17 and His19 together coordinate Zn(2+). Substrate contacts are provided by residues 19-21 (HVR) and Asn45. The Zn(2+) site is built by Lys102, His139, and His177. The residue at position 102 (Lys102) is an N6-carboxylysine. Position 139 (His139) interacts with substrate. Leu222 contributes to the substrate binding site. Asp250 contacts Zn(2+). Residue Asp250 is part of the active site. Residues His254 and Ala266 each coordinate substrate.

This sequence belongs to the metallo-dependent hydrolases superfamily. DHOase family. Class II DHOase subfamily. Homodimer. It depends on Zn(2+) as a cofactor.

The catalysed reaction is (S)-dihydroorotate + H2O = N-carbamoyl-L-aspartate + H(+). The protein operates within pyrimidine metabolism; UMP biosynthesis via de novo pathway; (S)-dihydroorotate from bicarbonate: step 3/3. Functionally, catalyzes the reversible cyclization of carbamoyl aspartate to dihydroorotate. This Acidovorax sp. (strain JS42) protein is Dihydroorotase.